The sequence spans 191 residues: Corrinoid adenosyltransferase (191 aa).

ATP contacts are provided by residues 10 to 18 (TRTGDNGTT), Lys-28, 140 to 145 (RRAERS), and Asn-166.

The protein belongs to the Cob(I)alamin adenosyltransferase family.

It localises to the cytoplasm. It carries out the reaction 2 cob(II)yrinate a,c diamide + reduced [electron-transfer flavoprotein] + 2 ATP = 2 adenosylcob(III)yrinate a,c-diamide + 2 triphosphate + oxidized [electron-transfer flavoprotein] + 3 H(+). It catalyses the reaction 2 cob(II)alamin + reduced [electron-transfer flavoprotein] + 2 ATP = 2 adenosylcob(III)alamin + 2 triphosphate + oxidized [electron-transfer flavoprotein] + 3 H(+). The protein operates within cofactor biosynthesis; adenosylcobalamin biosynthesis; adenosylcobalamin from cob(II)yrinate a,c-diamide: step 2/7. The protein is Corrinoid adenosyltransferase of Mycobacterium leprae (strain TN).